The sequence spans 354 residues: Neutral protease 2 homolog BCIN_12g06300 (354 aa).

Residues 1 to 19 (MRSFSKILAVASLAAIANS) form the signal peptide. A propeptide spanning residues 20–179 (AVLKRDNNVL…PSSIDRRTVL (160 aa)) is cleaved from the precursor. Cystine bridges form between cysteine 183–cysteine 255 and cysteine 262–cysteine 280. Residue histidine 305 coordinates Zn(2+). Residue glutamate 306 is part of the active site. Zn(2+) contacts are provided by histidine 309 and aspartate 320.

It belongs to the peptidase M35 family. Zn(2+) is required as a cofactor.

It localises to the secreted. The catalysed reaction is Preferential cleavage of bonds with hydrophobic residues in P1'. Also 3-Asn-|-Gln-4 and 8-Gly-|-Ser-9 bonds in insulin B chain.. Secreted metalloproteinase that allows assimilation of proteinaceous substrates. Shows high activities on basic nuclear substrates such as histone and protamine. This Botryotinia fuckeliana (strain B05.10) (Noble rot fungus) protein is Neutral protease 2 homolog BCIN_12g06300.